Consider the following 580-residue polypeptide: TRAF-type zinc finger domain-containing protein 1 (580 aa).

Position 2 is an N-acetylalanine (A2). The TRAF-type zinc-finger motif lies at 27-103; the sequence is IHEIHCQRNI…DLELSVVKLK (77 aa). Phosphoserine occurs at positions 278, 320, 326, 327, 409, 415, 430, 450, 469, and 532. Disordered regions lie at residues 395-453, 468-509, and 524-580; these read TANH…SPNR, PSGP…ASGH, and FAPS…EEEE. Polar residues predominate over residues 407–417; the sequence is QDSQPENTSAE.

As to quaternary structure, interacts with MAVS, TICAM1, TRAF1, TRAF2, TRAF3 and TRAF6. As to expression, expressed in skeletal muscle, brain, liver, kidney, spleen and bone marrow. Expression depends on STAT1.

In terms of biological role, negative feedback regulator that controls excessive innate immune responses. Regulates both Toll-like receptor 4 (TLR4) and DDX58/RIG1-like helicases (RLH) pathways. May inhibit the LTR pathway by direct interaction with TRAF6 and attenuation of NF-kappa-B activation. May negatively regulate the RLH pathway downstream from MAVS and upstream of NF-kappa-B and IRF3. The sequence is that of TRAF-type zinc finger domain-containing protein 1 (Trafd1) from Mus musculus (Mouse).